A 145-amino-acid chain; its full sequence is Venom protein 30.1 (145 aa).

The first 18 residues, 1–18 (MIIVKLFTCLLMVSSVLT), serve as a signal peptide directing secretion.

Contains 5 disulfide bonds. In terms of tissue distribution, expressed by the venom gland.

The protein localises to the secreted. The protein is Venom protein 30.1 of Lychas mucronatus (Chinese swimming scorpion).